We begin with the raw amino-acid sequence, 729 residues long: Glutamine synthetase (729 aa).

Residues 85-174 (THYTHWFQPL…IPTIFISYTG (90 aa)) enclose the GS beta-grasp domain. One can recognise a GS catalytic domain in the interval 179 to 615 (YKTPLLKALA…VLGDLAINHI (437 aa)). Residues glutamate 215, glutamate 217, glutamate 286, and glutamate 293 each contribute to the Mg(2+) site. L-glutamate is bound by residues 337 to 338 (NG) and glycine 338. Histidine 342 contacts Mg(2+). The ATP site is built by serine 346 and arginine 458. Position 458 (arginine 458) interacts with L-glutamate.

Belongs to the glutamine synthetase family. As to quaternary structure, homohexamer. Mg(2+) serves as cofactor.

The protein localises to the cytoplasm. It catalyses the reaction L-glutamate + NH4(+) + ATP = L-glutamine + ADP + phosphate + H(+). Inhibited by L-histidine (46%), L-arginine (38%) and L-methionine-DL-sulphoximine. The activity of this enzyme is not controlled by adenylation. Its function is as follows. Catalyzes the ATP-dependent biosynthesis of glutamine from glutamate and ammonia. This chain is Glutamine synthetase, found in Bacteroides fragilis (strain YCH46).